The chain runs to 493 residues: Argininosuccinate lyase (493 aa).

Belongs to the lyase 1 family. Argininosuccinate lyase subfamily.

The protein localises to the cytoplasm. It carries out the reaction 2-(N(omega)-L-arginino)succinate = fumarate + L-arginine. The protein operates within amino-acid biosynthesis; L-arginine biosynthesis; L-arginine from L-ornithine and carbamoyl phosphate: step 3/3. The sequence is that of Argininosuccinate lyase from Clavibacter sepedonicus (Clavibacter michiganensis subsp. sepedonicus).